We begin with the raw amino-acid sequence, 96 residues long: Tenecin-3 (96 aa).

An N-terminal signal peptide occupies residues Met-1–Pro-18. The interval Asp-19–His-96 is disordered. 12 repeat units span residues Gly-23 to Gly-26, Gly-31 to Gly-34, Gly-35 to Gly-38, Gly-39 to Gly-42, Gly-43 to Gly-46, Gly-47 to Gly-50, Gly-51 to Gly-54, Gly-59 to Gly-62, Gly-63 to Gly-66, Gly-67 to Gly-70, Gly-77 to Gly-80, and Gly-86 to Gly-89. Positions Gly-23–Gly-89 are 12 X 4 AA repeats of G-X-X-G. The span at Gly-26–Gly-89 shows a compositional bias: gly residues.

To H.diomphalia holotricin 3.

It localises to the secreted. In terms of biological role, antifungal heat stable protein produced in response to injury. It is active against C.albicans. No antibacterial activity against Gram-positive and Gram-negative bacteria. The protein is Tenecin-3 of Tenebrio molitor (Yellow mealworm beetle).